The following is a 261-amino-acid chain: RNA-binding protein 1 (261 aa).

Disordered regions lie at residues 1 to 38 and 232 to 261; these read MADGYWNRQQSLLPHSGLHKRPRPDYEMPASGLPSGNE and QFSRYPGPRSGGGPRSSGPPRGGHGSRGRR. One can recognise an RRM domain in the interval 151–236; the sequence is PTLYIEGLPS…SHLRLQFSRY (86 aa). Residues 240–254 are compositionally biased toward gly residues; it reads RSGGGPRSSGPPRGG.

In terms of tissue distribution, ubiquitous.

The protein resides in the nucleus speckle. It is found in the cytoplasmic granule. In terms of biological role, RNA-binding protein interacting with the enod40 RNA. This Medicago truncatula (Barrel medic) protein is RNA-binding protein 1.